A 206-amino-acid chain; its full sequence is Dephospho-CoA kinase (206 aa).

The 197-residue stretch at 4-200 (IVALTGGIGS…HRYLKLATAA (197 aa)) folds into the DPCK domain. Residue 12–17 (GSGKST) participates in ATP binding.

This sequence belongs to the CoaE family.

It is found in the cytoplasm. It catalyses the reaction 3'-dephospho-CoA + ATP = ADP + CoA + H(+). The protein operates within cofactor biosynthesis; coenzyme A biosynthesis; CoA from (R)-pantothenate: step 5/5. In terms of biological role, catalyzes the phosphorylation of the 3'-hydroxyl group of dephosphocoenzyme A to form coenzyme A. This is Dephospho-CoA kinase from Yersinia pestis.